Here is a 377-residue protein sequence, read N- to C-terminus: MSLVRLAHELPIEAPRTAWLDSIIKGDCVAALERLPDHSVDVIFADPPYNLQLGGDLHRPDQSMVSAVDDHWDQFESFQAYDAFTRAWLMACRRVLKPNGTIWVIGSYHNIFRVGSQLQDLGFWLLNDVIWRKTNPMPNFRGRRFQNAHETLIWASRDQKGKGYTFNYEAMKAANDDVQMRSDWLFPICTGSERLKDENGDKVHPTQKPEALLARIMMASSKPGDVILDPFFGSGTTGAVAKRLGRHFVGIEREQSYIDAATARIDAVEPLGKAELTVMTGKRAEPRVAFTSVLEAGLLRPGTVLCDERRRFAAIVRADGTLAANGEAGSIHRIGAKVQGFDACNGWTFWHYEENGALKPIDALRKVIRDQMAVAGA.

One can recognise an RAMA domain in the interval 271 to 373; the sequence is LGKAELTVMT…LRKVIRDQMA (103 aa).

It belongs to the N(4)/N(6)-methyltransferase family.

It catalyses the reaction a 2'-deoxyadenosine in DNA + S-adenosyl-L-methionine = an N(6)-methyl-2'-deoxyadenosine in DNA + S-adenosyl-L-homocysteine + H(+). Its function is as follows. A beta subtype methylase that recognizes the double-stranded sequence 5'-GANTC-3' and methylates A-2 on both strands. CcrM-mediated methylation has important cellular functions. Contributes to the accurate cell-cycle control of DNA replication and cellular morphology. This chain is DNA methyltransferase CcrM (ccrM), found in Brucella anthropi (strain ATCC 49188 / DSM 6882 / CCUG 24695 / JCM 21032 / LMG 3331 / NBRC 15819 / NCTC 12168 / Alc 37) (Ochrobactrum anthropi).